A 575-amino-acid chain; its full sequence is Proline--tRNA ligase, cytoplasmic (575 aa).

The protein belongs to the class-II aminoacyl-tRNA synthetase family.

The protein resides in the cytoplasm. The catalysed reaction is tRNA(Pro) + L-proline + ATP = L-prolyl-tRNA(Pro) + AMP + diphosphate. The polypeptide is Proline--tRNA ligase, cytoplasmic (PRS) (Candida albicans (Yeast)).